We begin with the raw amino-acid sequence, 249 residues long: ATP synthase subunit a, chloroplastic (249 aa).

A run of 5 helical transmembrane segments spans residues 40-60 (QVLITSWVVIAILLGSAIVAV), 97-117 (VPFIGTMFLFIFVSNWAGALL), 136-156 (INTTVALALLTSIAYFYAGLS), 201-221 (LVVVVLVSLVPSVVPIPVMFL), and 222-242 (GLFTSGIQALIFATLAAAYIG).

The protein belongs to the ATPase A chain family. In terms of assembly, F-type ATPases have 2 components, CF(1) - the catalytic core - and CF(0) - the membrane proton channel. CF(1) has five subunits: alpha(3), beta(3), gamma(1), delta(1), epsilon(1). CF(0) has four main subunits: a, b, b' and c.

The protein localises to the plastid. It localises to the chloroplast thylakoid membrane. In terms of biological role, key component of the proton channel; it plays a direct role in the translocation of protons across the membrane. The protein is ATP synthase subunit a, chloroplastic of Manihot esculenta (Cassava).